Here is a 271-residue protein sequence, read N- to C-terminus: S-adenosylmethionine decarboxylase proenzyme (271 aa).

The active-site Schiff-base intermediate with substrate; via pyruvic acid is S121. Pyruvic acid (Ser); by autocatalysis is present on S121. Residue H126 is the Proton acceptor; for processing activity of the active site. Catalysis depends on C149, which acts as the Proton donor; for catalytic activity.

The protein belongs to the prokaryotic AdoMetDC family. Type 2 subfamily. In terms of assembly, heterooctamer of four alpha and four beta chains arranged as a tetramer of alpha/beta heterodimers. Pyruvate serves as cofactor. In terms of processing, is synthesized initially as an inactive proenzyme. Formation of the active enzyme involves a self-maturation process in which the active site pyruvoyl group is generated from an internal serine residue via an autocatalytic post-translational modification. Two non-identical subunits are generated from the proenzyme in this reaction, and the pyruvate is formed at the N-terminus of the alpha chain, which is derived from the carboxyl end of the proenzyme. The post-translation cleavage follows an unusual pathway, termed non-hydrolytic serinolysis, in which the side chain hydroxyl group of the serine supplies its oxygen atom to form the C-terminus of the beta chain, while the remainder of the serine residue undergoes an oxidative deamination to produce ammonia and the pyruvoyl group blocking the N-terminus of the alpha chain.

The enzyme catalyses S-adenosyl-L-methionine + H(+) = S-adenosyl 3-(methylsulfanyl)propylamine + CO2. The protein operates within amine and polyamine biosynthesis; S-adenosylmethioninamine biosynthesis; S-adenosylmethioninamine from S-adenosyl-L-methionine: step 1/1. Functionally, catalyzes the decarboxylation of S-adenosylmethionine to S-adenosylmethioninamine (dcAdoMet), the propylamine donor required for the synthesis of the polyamines spermine and spermidine from the diamine putrescine. This Clostridium beijerinckii (strain ATCC 51743 / NCIMB 8052) (Clostridium acetobutylicum) protein is S-adenosylmethionine decarboxylase proenzyme.